The primary structure comprises 118 residues: Large ribosomal subunit protein eL18 (118 aa).

Belongs to the eukaryotic ribosomal protein eL18 family.

The chain is Large ribosomal subunit protein eL18 from Nanoarchaeum equitans (strain Kin4-M).